Reading from the N-terminus, the 249-residue chain is Probable transcriptional regulatory protein Meso_3192 (249 aa).

The protein belongs to the TACO1 family.

It localises to the cytoplasm. In Chelativorans sp. (strain BNC1), this protein is Probable transcriptional regulatory protein Meso_3192.